Here is a 198-residue protein sequence, read N- to C-terminus: Recombination protein RecR (198 aa).

Residues 56–71 form a C4-type zinc finger; sequence CTECRDFSETKICAIC. The 96-residue stretch at 79–174 folds into the Toprim domain; that stretch reads HQLCVVESPP…RPSRLAQGLP (96 aa).

This sequence belongs to the RecR family.

Its function is as follows. May play a role in DNA repair. It seems to be involved in an RecBC-independent recombinational process of DNA repair. It may act with RecF and RecO. The protein is Recombination protein RecR of Xylella fastidiosa (strain 9a5c).